The sequence spans 290 residues: Protease HtpX (290 aa).

2 helical membrane passes run 6-26 and 36-56; these read LFLVTNLAVMLVLGVVLNILF and ISGLLMFCAVFGFGGSFISLL. Position 143 (histidine 143) interacts with Zn(2+). Glutamate 144 is an active-site residue. Zn(2+) is bound at residue histidine 147. The next 2 membrane-spanning stretches (helical) occupy residues 158 to 178 and 200 to 220; these read LIQGVVNTFVMFFARIVAGVI and ITVFVLEMAFGVLASMIVMWF. Glutamate 225 contributes to the Zn(2+) binding site.

Belongs to the peptidase M48B family. It depends on Zn(2+) as a cofactor.

The protein localises to the cell inner membrane. The polypeptide is Protease HtpX (Aeromonas salmonicida (strain A449)).